Reading from the N-terminus, the 373-residue chain is Probable pectin lyase C (373 aa).

The signal sequence occupies residues 1 to 17; that stretch reads MKKYLLSLLAAVTYTTA. Intrachain disulfides connect C78/C95 and C87/C215. N-linked (GlcNAc...) asparagine glycosylation is found at N140 and N229. Residue R245 is part of the active site. C315 and C323 are joined by a disulfide.

The protein belongs to the polysaccharide lyase 1 family.

It localises to the secreted. The enzyme catalyses Eliminative cleavage of (1-&gt;4)-alpha-D-galacturonan methyl ester to give oligosaccharides with 4-deoxy-6-O-methyl-alpha-D-galact-4-enuronosyl groups at their non-reducing ends.. Pectinolytic enzymes consist of four classes of enzymes: pectin lyase, polygalacturonase, pectin methylesterase and rhamnogalacturonase. Among pectinolytic enzymes, pectin lyase is the most important in depolymerization of pectin, since it cleaves internal glycosidic bonds of highly methylated pectins. This Emericella nidulans (strain FGSC A4 / ATCC 38163 / CBS 112.46 / NRRL 194 / M139) (Aspergillus nidulans) protein is Probable pectin lyase C (pelC).